An 829-amino-acid polypeptide reads, in one-letter code: Ent-cassa-12,15-diene synthase (829 aa).

The segment at 1-50 (MMLLGSPSSGGYGGKFAGASPAGGTTTMAPSAKQPSSRAPPPGITGGRND) is disordered. Polar residues predominate over residues 23-37 (GGTTTMAPSAKQPSS). 4 residues coordinate Mg(2+): D576, D580, N720, and E728. The DDXXD motif signature appears at 576–580 (DDLFD).

It belongs to the terpene synthase family. Mg(2+) serves as cofactor. Expressed in roots and stems.

The catalysed reaction is ent-copalyl diphosphate = ent-cassa-12,15-diene + diphosphate. Its function is as follows. Involved in phytocassane phytoalexins biosynthesis. Catalyzes the conversion of ent-copalyl diphosphate to the phytoalexin precursor ent-cassa-12,15-diene. The chain is Ent-cassa-12,15-diene synthase (KSL7) from Oryza sativa subsp. japonica (Rice).